The chain runs to 6713 residues: Extracellular matrix-binding protein EbhA (6713 aa).

FIVAR domains lie at 1 to 58 (MGNL…VEQA), 126 to 184 (AMGQ…VTAA), 252 to 310 (AMKG…ITQA), 378 to 436 (QMGN…VEAA), 504 to 562 (AMAN…VENA), 630 to 688 (AMGT…INQI), 756 to 814 (AMGQ…VDRA), 882 to 940 (AMNS…VDNA), 1008 to 1066 (AMGA…INDM), 1134 to 1192 (AMTA…VNSA), 1260 to 1318 (AMKG…ITQA), 1386 to 1444 (AMHS…VEQA), 1512 to 1570 (AMGQ…VERA), 1638 to 1696 (AMTA…VTNA), 1764 to 1822 (AMKG…INQA), 1890 to 1948 (AMTN…VETA), 2142 to 2200 (AMNQ…INQK), 2268 to 2325 (AMGN…VQAA), 2393 to 2451 (AMGQ…VEAA), 2519 to 2577 (AMQR…VEQA), 2645 to 2703 (AMDQ…VTAA), 2771 to 2829 (AMNQ…VTQA), 2897 to 2955 (AMER…VEAA), 3023 to 3081 (AMGN…VEAA), 3149 to 3207 (AMDK…INQA), 3275 to 3333 (AMGN…VEQA), 3401 to 3459 (AMTQ…ITAA), 3527 to 3585 (AMTQ…IQQA), 3653 to 3711 (AMTN…VEQA), 3779 to 3837 (AMTQ…VAQA), 3905 to 3963 (AMGT…VTKA), 4031 to 4089 (AMGN…ITRA), 4157 to 4218 (AMDQ…ITNE), 4283 to 4341 (AMEL…VNGA), 4409 to 4467 (AMGN…VEQA), 4535 to 4592 (AMHG…INQV), 4660 to 4718 (LMDA…VSSA), 4786 to 4844 (AMKA…IDQA), 4912 to 4970 (AMEA…VEQL), 5038 to 5096 (AMQA…VEQL), 5164 to 5222 (AMET…VEQA), 5290 to 5344 (SMDQ…VDQA), 5412 to 5471 (AMDQ…VIKL), and 5666 to 5722 (AMET…INGA). A helical membrane pass occupies residues 6518–6540 (VIKNAIGVVGISGLLASFWFFIA). The interval 6616 to 6713 (RRKEDEEDVE…KKKKSKKNKK (98 aa)) is disordered. Composition is skewed to basic and acidic residues over residues 6631–6641 (TDEKVLKDNEH) and 6680–6690 (QKDNQSKDKKS). A compositionally biased stretch (basic residues) spans 6695 to 6713 (TSKKVAAKKKKKKSKKNKK).

It localises to the cell membrane. The protein is Extracellular matrix-binding protein EbhA (ebhA) of Staphylococcus aureus (strain Mu3 / ATCC 700698).